The primary structure comprises 250 residues: uncharacterized protein (250 aa).

Belongs to the carbohydrate kinase PfkB family.

This is an uncharacterized protein from Archaeoglobus fulgidus (strain ATCC 49558 / DSM 4304 / JCM 9628 / NBRC 100126 / VC-16).